Reading from the N-terminus, the 351-residue chain is Nicotinate-nucleotide--dimethylbenzimidazole phosphoribosyltransferase (351 aa).

Residue E317 is the Proton acceptor of the active site.

The protein belongs to the CobT family.

The catalysed reaction is 5,6-dimethylbenzimidazole + nicotinate beta-D-ribonucleotide = alpha-ribazole 5'-phosphate + nicotinate + H(+). It functions in the pathway nucleoside biosynthesis; alpha-ribazole biosynthesis; alpha-ribazole from 5,6-dimethylbenzimidazole: step 1/2. Functionally, catalyzes the synthesis of alpha-ribazole-5'-phosphate from nicotinate mononucleotide (NAMN) and 5,6-dimethylbenzimidazole (DMB). This Pseudomonas putida (strain W619) protein is Nicotinate-nucleotide--dimethylbenzimidazole phosphoribosyltransferase.